A 277-amino-acid chain; its full sequence is Putative protease slr0021 (277 aa).

Residue S85 is the Nucleophile of the active site. K137 serves as the catalytic Proton donor/acceptor.

The protein belongs to the peptidase S49 family.

The sequence is that of Putative protease slr0021 from Synechocystis sp. (strain ATCC 27184 / PCC 6803 / Kazusa).